We begin with the raw amino-acid sequence, 104 residues long: L-rhamnose mutarotase (104 aa).

Residue tyrosine 18 coordinates substrate. Histidine 22 (proton donor) is an active-site residue. Substrate-binding positions include tyrosine 41 and 76-77 (WW).

The protein belongs to the rhamnose mutarotase family. As to quaternary structure, homodimer.

The protein localises to the cytoplasm. The enzyme catalyses alpha-L-rhamnose = beta-L-rhamnose. The protein operates within carbohydrate metabolism; L-rhamnose metabolism. Functionally, involved in the anomeric conversion of L-rhamnose. This Mannheimia succiniciproducens (strain KCTC 0769BP / MBEL55E) protein is L-rhamnose mutarotase.